Consider the following 317-residue polypeptide: MGESKRTEKTRVLVVGATGYIGKRIVRACLAEGHETYVLQRPEIGLEIEKVQLFLSFKKLGARIVEGSFSDHQSLVSAVKLVDVVVSAMSGVHFRSHNILVQLKLVEAIKEAGNVKRFLPSEFGMDPPRMGHALPPGRETFDQKMEVRQAIEAAGIPYTYVVGACFAAYFAGNLSQMVTLLPPKEKVNIYGDGNVKVVFADEDDIAKYTAKTLNDPRTLNKTVNIRPPDNVLTQLELVQIWEKLTGKELEKTNIAAQDFLANIEQMEIPHQAGIGHFYHIFYEGCLTDHEVGEDEEASSLYPDVKYKRMDDYLRMFL.

Positions 18, 20, 21, 41, 50, 90, 91, 95, 98, 121, and 122 each coordinate NADP(+). Met-125 provides a ligand contact to (-)-pinoresinol. The NADP(+) site is built by Lys-144 and Phe-166. Lys-144 functions as the Proton acceptor in the catalytic mechanism. The (-)-pinoresinol site is built by Met-177 and Val-178.

The protein belongs to the NmrA-type oxidoreductase family. Isoflavone reductase subfamily. Forms homodimers. In terms of tissue distribution, expressed in roots and stems.

It carries out the reaction (-)-lariciresinol + NADP(+) = (-)-pinoresinol + NADPH + H(+). It catalyses the reaction (+)-lariciresinol + NADP(+) = (+)-pinoresinol + NADPH + H(+). Its function is as follows. Reductase involved in lignan biosynthesis. Involved in secondary cell wall biosynthesis in fiber cells. Unlike conventional pinoresinol reductases that can reduce both pinoresinol and lariciresinol, PRR1 shows a strict substrate preference toward pinoresinol. Active on both (+) and (-)-pinoresinol. Abstracts the 4R-hydride from the NADPH cofactor during catalysis. This is Pinoresinol reductase 1 from Arabidopsis thaliana (Mouse-ear cress).